We begin with the raw amino-acid sequence, 445 residues long: Xylose isomerase (445 aa).

Active-site residues include histidine 107 and aspartate 110. 7 residues coordinate Mg(2+): glutamate 238, glutamate 274, histidine 277, aspartate 302, aspartate 313, aspartate 315, and aspartate 345.

It belongs to the xylose isomerase family. In terms of assembly, homotetramer. Requires Mg(2+) as cofactor.

The protein localises to the cytoplasm. It catalyses the reaction alpha-D-xylose = alpha-D-xylulofuranose. This chain is Xylose isomerase (xylA), found in Bacillus subtilis (strain 168).